Reading from the N-terminus, the 435-residue chain is Putative GMP synthase [glutamine-hydrolyzing] 2 (435 aa).

A Glutamine amidotransferase type-1; truncated domain is found at 1–120 (MKQDMIVILD…VFDTCQAEAN (120 aa)). Residues 121 to 310 (WNMANFVNDQ…LGLPYEMVYR (190 aa)) form the GMPS ATP-PPase domain. 148 to 154 (SGGVDSS) is a binding site for ATP.

As to quaternary structure, homodimer.

It catalyses the reaction XMP + L-glutamine + ATP + H2O = GMP + L-glutamate + AMP + diphosphate + 2 H(+). Its pathway is purine metabolism; GMP biosynthesis; GMP from XMP (L-Gln route): step 1/1. Functionally, catalyzes the synthesis of GMP from XMP. The sequence is that of Putative GMP synthase [glutamine-hydrolyzing] 2 (guaA2) from Bacteroides thetaiotaomicron (strain ATCC 29148 / DSM 2079 / JCM 5827 / CCUG 10774 / NCTC 10582 / VPI-5482 / E50).